Consider the following 348-residue polypeptide: Phosphoribosylformylglycinamidine cyclo-ligase (348 aa).

This sequence belongs to the AIR synthase family.

Its subcellular location is the cytoplasm. The enzyme catalyses 2-formamido-N(1)-(5-O-phospho-beta-D-ribosyl)acetamidine + ATP = 5-amino-1-(5-phospho-beta-D-ribosyl)imidazole + ADP + phosphate + H(+). Its pathway is purine metabolism; IMP biosynthesis via de novo pathway; 5-amino-1-(5-phospho-D-ribosyl)imidazole from N(2)-formyl-N(1)-(5-phospho-D-ribosyl)glycinamide: step 2/2. The protein is Phosphoribosylformylglycinamidine cyclo-ligase of Ruegeria pomeroyi (strain ATCC 700808 / DSM 15171 / DSS-3) (Silicibacter pomeroyi).